The primary structure comprises 482 residues: Putative transposase R186 (482 aa).

Cysteine 416, cysteine 419, cysteine 433, and cysteine 435 together coordinate Zn(2+).

In the central section; belongs to the transposase 2 family. The protein in the C-terminal section; belongs to the transposase 35 family.

The polypeptide is Putative transposase R186 (Acanthamoeba polyphaga (Amoeba)).